The following is a 446-amino-acid chain: MREIVHLQTGQCGNQIGAAFWQTISGEHGLDSNGVYNGTSELQLERMSVYFNERSGNKYVPRAVLVDLEPGTMDAVRAGPFGQLFRPDNFVFGQSGAGNNWAKGHYTEGAELVDQVLDVVRREAEGCDCLQGFQITHSLGGGTGAGMGTLLISKIREEFPDRMMATFSVVPSPKVSDTVVEPYNATLSVHQLVENSDETFCIDNEALYDICMRTLKLSNPSYGDLNYLVSAVMSGVTTCLRFPGQLNSDLRKLAVNMVPFPRLHFFMVGFAPLTSRGAHSFRAVSVPELTQQMFDPKNMMAASDFRNGRYLTCSAIFRGRVAMKEVEDQMRNVQNKNSSYFVEWIPNNIQTALCAIPPRGLTMSSTFIGNSTSIQELFKRVGEQFTAMFRRKAFLHWYTGEGMDEMEFTEAESNMNDLVSEYQQYQDAGIDEEEEEYEEELPEGEE.

Glutamine 11, glutamate 69, serine 138, glycine 142, threonine 143, glycine 144, asparagine 204, and asparagine 226 together coordinate GTP. A Mg(2+)-binding site is contributed by glutamate 69. Positions 421–446 are disordered; that stretch reads EYQQYQDAGIDEEEEEYEEELPEGEE. Over residues 429–446 the composition is skewed to acidic residues; the sequence is GIDEEEEEYEEELPEGEE.

It belongs to the tubulin family. As to quaternary structure, dimer of alpha and beta chains. A typical microtubule is a hollow water-filled tube with an outer diameter of 25 nm and an inner diameter of 15 nM. Alpha-beta heterodimers associate head-to-tail to form protofilaments running lengthwise along the microtubule wall with the beta-tubulin subunit facing the microtubule plus end conferring a structural polarity. Microtubules usually have 13 protofilaments but different protofilament numbers can be found in some organisms and specialized cells. It depends on Mg(2+) as a cofactor.

The protein resides in the cytoplasm. Its subcellular location is the cytoskeleton. Tubulin is the major constituent of microtubules, a cylinder consisting of laterally associated linear protofilaments composed of alpha- and beta-tubulin heterodimers. Microtubules grow by the addition of GTP-tubulin dimers to the microtubule end, where a stabilizing cap forms. Below the cap, tubulin dimers are in GDP-bound state, owing to GTPase activity of alpha-tubulin. The protein is Tubulin beta chain (TUB2) of Fusarium fujikuroi (Bakanae and foot rot disease fungus).